A 161-amino-acid chain; its full sequence is UPF0262 protein Meso_0189 (161 aa).

It belongs to the UPF0262 family.

This Chelativorans sp. (strain BNC1) protein is UPF0262 protein Meso_0189.